The primary structure comprises 511 residues: 2-isopropylmalate synthase (511 aa).

One can recognise a Pyruvate carboxyltransferase domain in the interval 5-267 (IQIFDTTLRD…QTQINLEETK (263 aa)). The Mn(2+) site is built by D14, H202, H204, and N238. Residues 391-511 (KVETLQLQFV…NTKVEEGIHS (121 aa)) are regulatory domain.

This sequence belongs to the alpha-IPM synthase/homocitrate synthase family. LeuA type 1 subfamily. In terms of assembly, homodimer. The cofactor is Mn(2+).

It localises to the cytoplasm. The enzyme catalyses 3-methyl-2-oxobutanoate + acetyl-CoA + H2O = (2S)-2-isopropylmalate + CoA + H(+). Its pathway is amino-acid biosynthesis; L-leucine biosynthesis; L-leucine from 3-methyl-2-oxobutanoate: step 1/4. In terms of biological role, catalyzes the condensation of the acetyl group of acetyl-CoA with 3-methyl-2-oxobutanoate (2-ketoisovalerate) to form 3-carboxy-3-hydroxy-4-methylpentanoate (2-isopropylmalate). In Staphylococcus saprophyticus subsp. saprophyticus (strain ATCC 15305 / DSM 20229 / NCIMB 8711 / NCTC 7292 / S-41), this protein is 2-isopropylmalate synthase.